The following is a 166-amino-acid chain: Phospholipase A2 myotoxin inhibitor protein (166 aa).

Positions 1 to 19 (MRLILLSGLLLLGTFLANG) are cleaved as a signal peptide. The C-type lectin domain maps to 46–161 (LKYAFLTVHK…CDDNLLVVCE (116 aa)). Cystine bridges form between Cys-83-Cys-160 and Cys-138-Cys-152. Asn-122 is a glycosylation site (N-linked (GlcNAc...) asparagine).

It belongs to the alpha-type phospholipase A2 inhibitor family. As to quaternary structure, oligomer. Homotrimer; non-covalently linked. Glycosylated. The glycosylation has no role in the association of this PLI and PA2 enzyme. Expressed by the liver.

The protein resides in the secreted. In terms of biological role, this phospholipase A2 inhibitor binds directly phospholipase A2 in the presence or absence of calcium. Has anti-enzymatic, anti-myotoxic, anti-edema inducing, anti-cytotoxic, anti-bactericidal, and anti-lethal properties against basic and acidic phospholipases A2 from Bothrops venoms. This chain is Phospholipase A2 myotoxin inhibitor protein, found in Bothrops moojeni (Lance-headed viper).